The sequence spans 492 residues: Glutamyl-tRNA(Gln) amidotransferase subunit A, mitochondrial (492 aa).

Residues lysine 78 and serine 159 each act as charge relay system in the active site. Residue serine 183 is the Acyl-ester intermediate of the active site.

This sequence belongs to the amidase family. GatA subfamily. Subunit of the heterotrimeric GatCAB amidotransferase (AdT) complex, composed of A, B and C subunits.

The protein resides in the mitochondrion. It carries out the reaction L-glutamyl-tRNA(Gln) + L-glutamine + ATP + H2O = L-glutaminyl-tRNA(Gln) + L-glutamate + ADP + phosphate + H(+). In terms of biological role, allows the formation of correctly charged Gln-tRNA(Gln) through the transamidation of misacylated Glu-tRNA(Gln) in the mitochondria. The reaction takes place in the presence of glutamine and ATP through an activated gamma-phospho-Glu-tRNA(Gln). The protein is Glutamyl-tRNA(Gln) amidotransferase subunit A, mitochondrial of Anopheles gambiae (African malaria mosquito).